The sequence spans 221 residues: Ras-related protein Rab-27A (221 aa).

Ser-2 is subject to N-acetylserine. Phosphoserine is present on Ser-2. GTP is bound at residue 16-24; it reads GDSGVGKTS. Positions 38–46 match the Effector region motif; sequence FITTVGIDF. GTP is bound by residues 74–78, 133–136, and 163–165; these read DTAGQ, NKSD, and SAA. Residues Cys-123 and Cys-188 are joined by a disulfide bond. 2 S-geranylgeranyl cysteine lipidation sites follow: Cys-219 and Cys-221. Position 221 is a cysteine methyl ester (Cys-221).

This sequence belongs to the small GTPase superfamily. Rab family. Binds SYTL1, SLAC2B, MYRIP, SYTL3, SYTL4 and SYTL5. Interacts with RPH3A and RPH3A. Binds MLPH and SYTL2. Interacts with UNC13D. Does not interact with the BLOC-3 complex (heterodimer of HPS1 and HPS4). Interacts (GDP-bound form preferentially) with DENND10.

It localises to the membrane. Its subcellular location is the melanosome. The protein resides in the late endosome. It is found in the lysosome. The enzyme catalyses GTP + H2O = GDP + phosphate + H(+). Its activity is regulated as follows. Regulated by guanine nucleotide exchange factors (GEFs) which promote the exchange of bound GDP for free GTP, GTPase activating proteins (GAPs) which increase the GTP hydrolysis activity, and GDP dissociation inhibitors which inhibit the dissociation of the nucleotide from the GTPase. Activated by GEFs such as DENND10. Its function is as follows. Small GTPase which cycles between active GTP-bound and inactive GDP-bound states. In its active state, binds to a variety of effector proteins to regulate homeostasis of late endocytic pathway, including endosomal positioning, maturation and secretion. Plays a role in cytotoxic granule exocytosis in lymphocytes. Required for both granule maturation and granule docking and priming at the immunologic synapse. This chain is Ras-related protein Rab-27A (RAB27A), found in Canis lupus familiaris (Dog).